The sequence spans 832 residues: Polyphosphoinositide phosphatase (832 aa).

The region spanning Ile145–Gly491 is the SAC domain.

As to quaternary structure, component of the PI(3,5)P2 regulatory complex. Requires Mg(2+) as cofactor.

The protein localises to the cytoplasm. The protein resides in the vacuole membrane. It carries out the reaction a 1,2-diacyl-sn-glycero-3-phospho-(1D-myo-inositol-3,5-bisphosphate) + H2O = a 1,2-diacyl-sn-glycero-3-phospho-(1D-myo-inositol-3-phosphate) + phosphate. Functionally, the PI(3,5)P2 regulatory complex regulates both the synthesis and turnover of phosphatidylinositol 3,5-bisphosphate (PtdIns(3,5)P2). The chain is Polyphosphoinositide phosphatase from Schizosaccharomyces pombe (strain 972 / ATCC 24843) (Fission yeast).